A 405-amino-acid polypeptide reads, in one-letter code: Histone deacetylase clr6 (405 aa).

The interval 6–318 (KKVSYFYDED…WTYETGLLAG (313 aa)) is histone deacetylase. The active site involves His138.

This sequence belongs to the histone deacetylase family. HD type 1 subfamily. Heterotetramer of alp13, clr6, prw1 and pst2.

The protein resides in the nucleus. It carries out the reaction N(6)-acetyl-L-lysyl-[histone] + H2O = L-lysyl-[histone] + acetate. Functionally, responsible for the deacetylation of lysine residues on the N-terminal part of the core histones (H2A, H2B, H3 and H4). Histone deacetylation gives a tag for epigenetic repression and plays an important role in transcriptional regulation, cell cycle progression and developmental events. Histone deacetylases act via the formation of large multiprotein complexes. Has a role in chromatin assembly and chromosome segregation. This is Histone deacetylase clr6 (clr6) from Schizosaccharomyces pombe (strain 972 / ATCC 24843) (Fission yeast).